The following is a 202-amino-acid chain: Probable cytochrome c oxidase subunit 3 (202 aa).

Helical transmembrane passes span V30–A50, A69–S89, W101–Y121, L141–L161, and I178–I198.

It belongs to the cytochrome c oxidase subunit 3 family.

It is found in the cell membrane. It carries out the reaction 4 Fe(II)-[cytochrome c] + O2 + 8 H(+)(in) = 4 Fe(III)-[cytochrome c] + 2 H2O + 4 H(+)(out). The sequence is that of Probable cytochrome c oxidase subunit 3 (ctaE) from Mycobacterium leprae (strain TN).